We begin with the raw amino-acid sequence, 695 residues long: Phenoloxidase subunit 2 (695 aa).

Residues H215, H219, and H245 each contribute to the Cu cation site. The active-site Proton acceptor is the E353. Cu cation contacts are provided by H368, H372, and H408. 2 disulfide bridges follow: C586/C630 and C588/C637.

As to quaternary structure, heterodimer. Forms a complex with an interleukin 1-like protein as a consequence of a host defense response. Cu(2+) serves as cofactor. In terms of processing, the N-terminus is blocked. As to expression, synthesized by oenocytoids, a type of hemocyte, and released into the hemolymph plasma.

Its subcellular location is the secreted. The enzyme catalyses 2 L-dopa + O2 = 2 L-dopaquinone + 2 H2O. It carries out the reaction L-tyrosine + O2 = L-dopaquinone + H2O. Activated by immulectin and lipopolysaccharide. This is a copper-containing oxidase that functions in the formation of pigments such as melanins and other polyphenolic compounds. Catalyzes the rate-limiting conversions of tyrosine to DOPA, DOPA to DOPA-quinone and possibly 5,6 dihydroxyindole to indole-5'6 quinone. Binds to the surface of hemocytes and is involved in hemocyte melanization. The chain is Phenoloxidase subunit 2 from Manduca sexta (Tobacco hawkmoth).